The following is a 253-amino-acid chain: CD151 antigen (253 aa).

Residues 1-18 (MGEFNEKKTTCGTVCLKY) lie on the Cytoplasmic side of the membrane. Residues cysteine 11 and cysteine 15 are each lipidated (S-palmitoyl cysteine). The chain crosses the membrane as a helical span at residues 19-39 (LLFTYNCCFWLAGLAVMAVGI). The Extracellular portion of the chain corresponds to 40-57 (WTLALKSDYISLLASGTY). Residues 58–78 (LATAYILVVAGAVVMVTGVLG) form a helical membrane-spanning segment. The Cytoplasmic portion of the chain corresponds to 79–91 (CCATFKERRNLLR). A helical transmembrane segment spans residues 92–112 (LYFILLLIIFLLEIIAGVLAY). Residues 113 to 221 (VYYQQLNTEL…LETFIQEHLR (109 aa)) are Extracellular-facing. N-linked (GlcNAc...) asparagine glycosylation is present at asparagine 159. A helical membrane pass occupies residues 222 to 242 (VIGAVGTGIACVQVFGMIFTC). Residues cysteine 242 and cysteine 243 are each lipidated (S-palmitoyl cysteine). Over 243-253 (CLYRSLKLEHY) the chain is Cytoplasmic.

Belongs to the tetraspanin (TM4SF) family. Interacts with integrins ITGA3:ITGB1, ITGA5:ITGB1, ITGA3:ITGB1 and ITGA6:ITGB4 and with CD9 and CD181. Interacts (via the second extracellular domain) with integrin ITGAV:ITGB3. Interacts with ITGA3; this interaction modulates ITGA3 glycosylation pattern. Interacts with F11R. Interacts with RAC1 and CDC42; these interactions mediate physical association of RAC1 and CDC42 with integrin adhesion receptor complexes. Palmitoylated. Palmitoylation by ZDHHC2 regulates CD151 expression, association with other tetraspanin family proteins and function in cell adhesion. Post-translationally, ubiquitinated by RNF128 on lysine residues present in the tetraspanin amino terminus via 'Lys-48'-linked ubiquitin leading to proteasomal degradation.

The protein resides in the cell membrane. In terms of biological role, structural component of specialized membrane microdomains known as tetraspanin-enriched microdomains (TERMs), which act as platforms for receptor clustering and signaling. Plays a role in various cellular and molecular mechanism through its association with both integrin and non-integrin proteins. These interactions facilitate critical cellular functions, including cell-to-cell communication, wound healing, platelet aggregation, trafficking, cell motility, and angiogenesis. Via interaction with JAM-A/F11R and integrin ITGA3:ITGB1, promotes the recruitment of signaling molecules such as RAC1, CDC42 and RhoGTPases to facilitate the polarization of epithelial cells and the reorganization of the actin cytoskeleton, which are critical steps in cell migration process. Regulates the glycosylation pattern of ITGA3:ITGB1 thereby modulating its activity. Plays an essential role in the maintenance of central laminin-binding integrin ITGA6:ITGB4-containing adhesion complexes. Essential for the proper assembly of the glomerular and tubular basement membranes in kidney. Contributes to T-cell activation by modulating integrin signaling leading to activation of downstream targets PTK2 and MAPK1/MAPK3. In Chlorocebus aethiops (Green monkey), this protein is CD151 antigen (CD151).